Consider the following 413-residue polypeptide: Interferon-inducible GTPase 1 (413 aa).

Residue glycine 2 is the site of N-myristoyl glycine attachment. The region spanning 68–250 (SVLNVAVTGE…PVLMDKLISD (183 aa)) is the IRG-type G domain. 7 residues coordinate GDP: glycine 79, glycine 81, lysine 82, serine 83, serine 84, threonine 102, and glycine 103. (Microbial infection) Phosphothreonine; by ROP18 is present on threonine 102. Threonine 108 carries the post-translational modification (Microbial infection) Phosphothreonine; by ROP18. 4 residues coordinate GDP: lysine 184, aspartate 186, serine 187, and asparagine 232. Residues cysteine 236 and cysteine 410 are joined by a disulfide bond.

This sequence belongs to the TRAFAC class dynamin-like GTPase superfamily. IRG family. In terms of assembly, monomer, as apoenzyme and in the GDP-bound form. Homooligomer, upon GTP binding. Interacts with HOOK3. (Microbial infection) Interacts with Toxoplasma gondii GRA7 in GTP-dependent manner; the interaction results in faster turnover of the GTP-activated IIGP1 oligomer. Interacts with T.gondii ROP5; the interaction results in inhibition of IRGA6/IIGP1 GTPase activity and oligomerization. Post-translationally, myristoylated. In terms of processing, (Microbial infection) Phosphorylated by Toxoplasma gondii ROP18 from virulent strains.

It is found in the cytoplasm. It localises to the nucleus membrane. Its subcellular location is the endoplasmic reticulum membrane. The protein localises to the golgi apparatus. The protein resides in the golgi stack membrane. It is found in the parasitophorous vacuole membrane. It carries out the reaction GTP + H2O = GDP + phosphate + H(+). In terms of biological role, GTPase with low activity. Has higher affinity for GDP than for GTP. Plays a role in resistance to intracellular pathogens. During infection with avirulent Toxoplasma gondii strains, recruited to the parasitophorous vacuole membrane. Required for disruption of the parasitophorous vacuole formed following T.gondii infection and subsequent killing of the parasite. Mediates resistance to Chlamydia trachomatis infection by targeting bacterial inclusions to autophagosomes for subsequent lysosomal destruction. In Mus musculus (Mouse), this protein is Interferon-inducible GTPase 1 (Iigp1).